We begin with the raw amino-acid sequence, 594 residues long: DEAD-box ATP-dependent RNA helicase 25 (594 aa).

Disordered regions lie at residues 56–80 (RSGG…EEGL) and 92–121 (GVRE…VDGS). A Q motif motif is present at residues 126–154 (TRFDQCTISPLSLKAVKDAGYERMTQVQE). Residues 157–340 (LPVILQGKDV…HIAMKKNYKF (184 aa)) form the Helicase ATP-binding domain. 170-177 (AKTGTGKT) lines the ATP pocket. The short motif at 288–291 (DEAD) is the DEAD box element. The region spanning 370–520 (ILYDVLKKHV…SVDSSTQTIV (151 aa)) is the Helicase C-terminal domain.

This sequence belongs to the DEAD box helicase family.

It catalyses the reaction ATP + H2O = ADP + phosphate + H(+). This chain is DEAD-box ATP-dependent RNA helicase 25, found in Oryza sativa subsp. japonica (Rice).